A 341-amino-acid chain; its full sequence is Hypophosphite import ATP-binding protein HtxD (341 aa).

Residues 6-249 enclose the ABC transporter domain; it reads LQLKNVGKSY…RVHALYQVPA (244 aa). Residue 38-45 coordinates ATP; that stretch reads GTSGAGKS. Residues 278–341 form a disordered region; sequence IHTPHTRAAP…TGRGQDRGPG (64 aa). 2 stretches are compositionally biased toward basic and acidic residues: residues 307-320 and 327-341; these read ADRR…DRTT and GGHD…RGPG.

Belongs to the ABC transporter superfamily. Phosphonates importer (TC 3.A.1.9.1) family. The complex is composed of two ATP-binding proteins (HtxD), two transmembrane proteins (HtxC and HtxE) and a solute-binding protein (HtxB).

Its subcellular location is the cell inner membrane. The catalysed reaction is phosphinate(out) + ATP + H2O = phosphinate(in) + ADP + phosphate + H(+). In terms of biological role, part of the ABC transporter complex HtxBCDE involved in hypophosphite import. Responsible for energy coupling to the transport system. This Stutzerimonas stutzeri (Pseudomonas stutzeri) protein is Hypophosphite import ATP-binding protein HtxD (htxD).